The primary structure comprises 691 residues: Histone-lysine N-methyltransferase Set8 (691 aa).

The disordered stretch occupies residues 1 to 29 (MIMVRRRQRPAKEAASSSSGGASSGSGIP). Residues 14–27 (AASSSSGGASSGSG) are compositionally biased toward low complexity. Phosphoserine is present on residues Ser195 and Ser250. A Phosphothreonine modification is found at Thr252. Ser281 carries the phosphoserine modification. Disordered stretches follow at residues 341–363 (TANT…HRIL), 382–401 (GSAD…TTTA), 407–437 (KSRR…QQQQ), and 464–516 (AEER…ATNG). Phosphothreonine is present on Thr344. 4 positions are modified to phosphoserine: Ser346, Ser383, Ser388, and Ser392. Polar residues-rich tracts occupy residues 421–430 (YQPQLQKPPS) and 471–481 (NKAPATANSNK). In terms of domain architecture, SET spans 555–676 (DGLQVRHFMG…PGEELTYDYG (122 aa)). Residues 565–567 (KGR), Tyr610, and 637–638 (NH) each bind S-adenosyl-L-methionine.

The protein belongs to the class V-like SAM-binding methyltransferase superfamily. Histone-lysine methyltransferase family. PR/SET subfamily.

It is found in the nucleus. The protein localises to the chromosome. The enzyme catalyses L-lysyl(20)-[histone H4] + S-adenosyl-L-methionine = N(6)-methyl-L-lysyl(20)-[histone H4] + S-adenosyl-L-homocysteine + H(+). Its function is as follows. Histone methyltransferase that specifically monomethylates 'Lys-20' of histone H4. H4 'Lys-20' monomethylation is enriched during mitosis and represents a specific tag for epigenetic transcriptional repression. Mainly functions in euchromatin regions, thereby playing a central role in the silencing of euchromatic genes. Required for cell proliferation, possibly by contributing to the maintenance of proper higher-order structure of DNA and chromosome condensation during mitosis. In Drosophila melanogaster (Fruit fly), this protein is Histone-lysine N-methyltransferase Set8.